The primary structure comprises 827 residues: Periplasmic nitrate reductase (827 aa).

Positions Met1 to Ala32 form a signal peptide, tat-type signal. The 4Fe-4S Mo/W bis-MGD-type domain maps to Ile37–Asp93. Positions 44, 47, 51, and 79 each coordinate [4Fe-4S] cluster. Mo-bis(molybdopterin guanine dinucleotide) contacts are provided by residues Lys81, Gln148, Asn173, Cys177, Trp210–Met217, Ser241–His245, Met371, Gln375, Asn481, Ser507–Asp508, Lys530, Asp557, and Thr717–Thr726. Position 793 (Phe793) interacts with substrate. Residues Asn801 and Lys818 each coordinate Mo-bis(molybdopterin guanine dinucleotide).

It belongs to the prokaryotic molybdopterin-containing oxidoreductase family. NasA/NapA/NarB subfamily. Component of the periplasmic nitrate reductase NapAB complex composed of NapA and NapB. The cofactor is [4Fe-4S] cluster. Requires Mo-bis(molybdopterin guanine dinucleotide) as cofactor. In terms of processing, predicted to be exported by the Tat system. The position of the signal peptide cleavage has not been experimentally proven.

The protein localises to the periplasm. It catalyses the reaction 2 Fe(II)-[cytochrome] + nitrate + 2 H(+) = 2 Fe(III)-[cytochrome] + nitrite + H2O. In terms of biological role, catalytic subunit of the periplasmic nitrate reductase complex NapAB. Receives electrons from NapB and catalyzes the reduction of nitrate to nitrite. This chain is Periplasmic nitrate reductase, found in Actinobacillus pleuropneumoniae serotype 7 (strain AP76).